Here is a 246-residue protein sequence, read N- to C-terminus: Probable transcriptional regulatory protein TM1040_1893 (246 aa).

A disordered region spans residues 1-21 (MAGHSKWANIQHRKGRQDAAR).

Belongs to the TACO1 family.

It is found in the cytoplasm. This Ruegeria sp. (strain TM1040) (Silicibacter sp.) protein is Probable transcriptional regulatory protein TM1040_1893.